Consider the following 357-residue polypeptide: Elongation factor Ts (357 aa).

The segment at 82 to 85 (TDFV) is involved in Mg(2+) ion dislocation from EF-Tu.

The protein belongs to the EF-Ts family.

Its subcellular location is the cytoplasm. Functionally, associates with the EF-Tu.GDP complex and induces the exchange of GDP to GTP. It remains bound to the aminoacyl-tRNA.EF-Tu.GTP complex up to the GTP hydrolysis stage on the ribosome. This chain is Elongation factor Ts, found in Campylobacter jejuni subsp. jejuni serotype O:2 (strain ATCC 700819 / NCTC 11168).